The primary structure comprises 148 residues: Large ribosomal subunit protein uL15 (148 aa).

The segment covering 1-30 (MTHSKRNTRKLRGHVSHGHGRVGKHRKHPG) has biased composition (basic residues). Positions 1-38 (MTHSKRNTRKLRGHVSHGHGRVGKHRKHPGGRGMAGPE) are disordered.

Belongs to the universal ribosomal protein uL15 family.

In Euplotes crassus, this protein is Large ribosomal subunit protein uL15 (RPL27A).